The sequence spans 184 residues: ATP synthase subunit b, chloroplastic (184 aa).

A helical membrane pass occupies residues 27-49 (LATNPINLSVVLGVLIFFGKGVL).

It belongs to the ATPase B chain family. As to quaternary structure, F-type ATPases have 2 components, F(1) - the catalytic core - and F(0) - the membrane proton channel. F(1) has five subunits: alpha(3), beta(3), gamma(1), delta(1), epsilon(1). F(0) has four main subunits: a(1), b(1), b'(1) and c(10-14). The alpha and beta chains form an alternating ring which encloses part of the gamma chain. F(1) is attached to F(0) by a central stalk formed by the gamma and epsilon chains, while a peripheral stalk is formed by the delta, b and b' chains.

Its subcellular location is the plastid. The protein localises to the chloroplast thylakoid membrane. In terms of biological role, f(1)F(0) ATP synthase produces ATP from ADP in the presence of a proton or sodium gradient. F-type ATPases consist of two structural domains, F(1) containing the extramembraneous catalytic core and F(0) containing the membrane proton channel, linked together by a central stalk and a peripheral stalk. During catalysis, ATP synthesis in the catalytic domain of F(1) is coupled via a rotary mechanism of the central stalk subunits to proton translocation. Its function is as follows. Component of the F(0) channel, it forms part of the peripheral stalk, linking F(1) to F(0). This is ATP synthase subunit b, chloroplastic from Pelargonium hortorum (Common geranium).